The primary structure comprises 92 residues: Putative transition state regulator Abh (92 aa).

The region spanning 5–50 (GVVRKVDELGRIVMPIELRRALDIAIKDSIEFFVDGDKIILKKYKP) is the SpoVT-AbrB domain.

The protein to B.subtilis AbrB and SpoVT.

The protein is Putative transition state regulator Abh (abh) of Bacillus subtilis (strain 168).